A 1174-amino-acid polypeptide reads, in one-letter code: Ribonucleoside-diphosphate reductase large subunit-like protein (1174 aa).

The RIP homotypic interaction motif (RHIM) motif lies at 50–72 (PYVRIMNGVSGIQIGNHNAMSIA). 2 disordered regions span residues 170 to 269 (ASNA…KLKP) and 291 to 325 (AAAA…DQSS). 3 stretches are compositionally biased toward low complexity: residues 182–202 (ATSG…AATA), 233–243 (HVSVGTQATPS), and 291–316 (AAAA…AMAT).

This sequence belongs to the ribonucleoside diphosphate reductase large chain family. Self-assembles into homo-oligomeric amyloid fibrils. Interacts with host RIPK1 (via RIP homotypic interaction motif); this interaction inhibits RIPK1 ubiquitination thereby preventing effective activation of host NF-kappa-B. Interacts with host RIPK3 (via RIP homotypic interaction motif); this interaction disrupts RIPK3-RIPK1 interactions characteristic of TNF-alpha induced necroptosis, thereby suppressing this death pathway. Interacts (via RIP homotypic interaction motif) with host ZBP1 (via RIP homotypic interaction motif); this interaction inhibits recruitment of RIPK1 and RIPK3 to ZBP1 and prevents ZBP1-induced NF-kappa-B activation. Post-translationally, undergoes proteolytic cleavage, generating two peptides, a N-terminal and a 116 kDa. The N-terminal peptide retains RIPK1- and RIPK3-binding activity as well as cell death suppression activity.

It localises to the virion. It is found in the host cytoplasm. Its function is as follows. Provides optimal viral replication conditions by promoting host cell survival and avoiding the host inflammatory response linked to NF-kappa-B activation. Blocks RIPK1 ubiquitination, thereby preventing NF-kappa-B activation and virally induced inflammatory response. Prevents host necroptosis by targeting RIPK3 thereby preventing the formation of necroptotic RIPK1-RIPK3 complexes. Also inhibits ZBP1-induced necroptosis. Does not have ribonucleotide reductase activity. Betaherpesviruses probably use another strategy to expand the dNTP pool in a quiescent host cell. This is Ribonucleoside-diphosphate reductase large subunit-like protein from Murid herpesvirus 1 (strain Smith) (MuHV-1).